The following is a 413-amino-acid chain: uncharacterized protein (413 aa).

Helical transmembrane passes span 22-42 (VLLVSILSKIGISISIFTLIL), 270-290 (IIYVTLFLIIIISCFSVISIC), 312-332 (ILIQLIFFYYGMRFIIIGNLI), and 379-399 (LIIIFISTLTIGIVANWYPIY).

It belongs to the ABC-4 integral membrane protein family. LolC/E subfamily.

It is found in the cell membrane. This is an uncharacterized protein from Buchnera aphidicola subsp. Schizaphis graminum (strain Sg).